A 327-amino-acid polypeptide reads, in one-letter code: MTMESGADNQQSGDAAVTEAENQQMTVQAQPQIATLAQVSMPAAHATSSAPTVTLVQLPNGQTVQVHGVIQAAQPSVIQSPQVQTVQISTIAESEDSQESVDSVTDSQKRREILSRRPSYRKILNDLSSDAPGVPRIEEEKSEEETSAPAITTVTVPTPIYQTSSGQYIAITQGGAIQLANNGTDGVQGLQTLTMTNAAATQPGTTILQYAQTTDGQQILVPSNQVVVQAASGDVQTYQIRTAPTSTIAPGVVMASSPALPTQPAEEAARKREVRLMKNREAARECRRKKKEYVKCLENRVAVLENQNKTLIEELKALKDLYCHKSD.

Disordered stretches follow at residues 1–27 (MTMESGADNQQSGDAAVTEAENQQMTV) and 94–113 (SEDSQESVDSVTDSQKRREI). The KID domain occupies 87–146 (QISTIAESEDSQESVDSVTDSQKRREILSRRPSYRKILNDLSSDAPGVPRIEEEKSEEET). The residue at position 119 (Ser119) is a Phosphoserine; by CaMK1, CaMK2, CaMK4, PKB/AKT1 or PKB/AKT2, RPS6KA3, RPS6KA4, RPS6KA5 and SGK1. Lys122 is covalently cross-linked (Glycyl lysine isopeptide (Lys-Gly) (interchain with G-Cter in SUMO2)). Positions 126-151 (DLSSDAPGVPRIEEEKSEEETSAPAI) are disordered. Ser128 is modified (phosphoserine; by CaMK2). Ser257 is subject to Phosphoserine; by HIPK2. In terms of domain architecture, bZIP spans 269–327 (ARKREVRLMKNREAARECRRKKKEYVKCLENRVAVLENQNKTLIEELKALKDLYCHKSD). A basic motif region spans residues 270-295 (RKREVRLMKNREAARECRRKKKEYVK). Glycyl lysine isopeptide (Lys-Gly) (interchain with G-Cter in SUMO1) cross-links involve residues Lys271 and Lys290. Residues 297–318 (LENRVAVLENQNKTLIEELKAL) are leucine-zipper.

The protein belongs to the bZIP family. As to quaternary structure, interacts with PPRC1. Binds DNA as a dimer. This dimer is stabilized by magnesium ions. Interacts, through the bZIP domain, with the coactivators CRTC1/TORC1, CRTC2/TORC2 and CRTC3/TORC3. Interacts (phosphorylated form) with TOX3. When phosphorylated on Ser-119, binds CREBBP. Interacts with ARRB1. Binds to HIPK2. Interacts with SGK1. Interacts with CREBL2; regulates CREB1 phosphorylation, stability and transcriptional activity. Interacts with TSSK4; this interaction facilitates phosphorylation on Ser-119. Forms a complex with KMT2A and CREBBP. Interacts with TOX4; CREB1 is required for full induction of TOX4-dependent activity and the interaction is increased by cAMP and inhibited by insulin. Phosphorylation of Ser-119 allows CREBBP binding. Stimulated by phosphorylation. Phosphorylated Ser-128 can be detected in the suprachiasmatic nucleus (SCN), the amygdala, the cortex, and the hippocampus but not in the striatum nor in the cerebellum. In the SCN, phosphorylation of Ser-128 and Ser-119 are stimulated by light exposure and submitted to circadian oscillations. In the retina, only phosphorylation of Ser-119 can be detected upon light exposure. Phosphorylation of both Ser-119 and Ser-128 in the SCN regulates the activity of CREB and participates in circadian rhythm generation. Phosphorylated upon calcium influx by CaMK4 and CaMK2 on Ser-119. CaMK4 is much more potent than CAMK2 in activating CREB. Phosphorylated by CaMK2 on Ser-128. Phosphorylation of Ser-128 blocks CREB-mediated transcription even when Ser-119 is phosphorylated. Phosphorylated by CaMK1. Phosphorylation of Ser-271 by HIPK2 in response to genotoxic stress promotes CREB1 activity, facilitating the recruitment of the coactivator CBP. Phosphorylated at Ser-119 by RPS6KA3, RPS6KA4 and RPS6KA5 in response to mitogenic or stress stimuli. CREBL2 positively regulates phosphorylation at Ser-119 thereby stimulating CREB1 transcriptional activity. In liver, phosphorylation is induced by fasting or glucagon in a circadian fashion. Phosphorylated by TSSK4 on Ser-119. Post-translationally, sumoylated with SUMO1. Sumoylation on Lys-290, but not on Lys-271, is required for nuclear localization of this protein. Sumoylation is enhanced under hypoxia, promoting nuclear localization and stabilization. In terms of tissue distribution, expressed in the heart (at protein level).

The protein resides in the nucleus. Its function is as follows. Phosphorylation-dependent transcription factor that stimulates transcription upon binding to the DNA cAMP response element (CRE), a sequence present in many viral and cellular promoters. Transcription activation is enhanced by the TORC coactivators which act independently of Ser-119 phosphorylation. Involved in different cellular processes including the synchronization of circadian rhythmicity and the differentiation of adipose cells. Regulates the expression of apoptotic and inflammatory response factors in cardiomyocytes in response to ERFE-mediated activation of AKT signaling. The chain is Cyclic AMP-responsive element-binding protein 1 (Creb1) from Mus musculus (Mouse).